A 509-amino-acid polypeptide reads, in one-letter code: Photosystem II CP47 reaction center protein (509 aa).

The next 6 helical transmembrane spans lie at 21–36 (AVHL…WAGS), 101–115 (IGLS…IWHW), 140–156 (GIHL…FGAF), 203–218 (IAAG…FHLS), 237–252 (VLSS…AFIV), and 457–472 (SFAL…HGGR).

This sequence belongs to the PsbB/PsbC family. PsbB subfamily. As to quaternary structure, PSII is composed of 1 copy each of membrane proteins PsbA, PsbB, PsbC, PsbD, PsbE, PsbF, PsbH, PsbI, PsbJ, PsbK, PsbL, PsbM, PsbT, PsbX, PsbY, PsbZ, Psb30/Ycf12, at least 3 peripheral proteins of the oxygen-evolving complex and a large number of cofactors. It forms dimeric complexes. It depends on Binds multiple chlorophylls. PSII binds additional chlorophylls, carotenoids and specific lipids. as a cofactor.

It localises to the plastid. The protein localises to the cyanelle thylakoid membrane. One of the components of the core complex of photosystem II (PSII). It binds chlorophyll and helps catalyze the primary light-induced photochemical processes of PSII. PSII is a light-driven water:plastoquinone oxidoreductase, using light energy to abstract electrons from H(2)O, generating O(2) and a proton gradient subsequently used for ATP formation. The sequence is that of Photosystem II CP47 reaction center protein from Cyanophora paradoxa.